The chain runs to 375 residues: Alcohol dehydrogenase 1 (375 aa).

S2 is subject to N-acetylserine. Zn(2+) contacts are provided by C47, H68, C98, C101, C104, C112, and C175. NAD(+) contacts are provided by residues 200-205 (GLGGVG), D224, K229, 293-295 (LGV), and R370.

The protein belongs to the zinc-containing alcohol dehydrogenase family. Class-I subfamily. In terms of assembly, homodimer. Requires Zn(2+) as cofactor.

The protein resides in the cytoplasm. The enzyme catalyses a primary alcohol + NAD(+) = an aldehyde + NADH + H(+). It catalyses the reaction a secondary alcohol + NAD(+) = a ketone + NADH + H(+). The sequence is that of Alcohol dehydrogenase 1 (ADH1) from Apteryx australis (Southern brown kiwi).